We begin with the raw amino-acid sequence, 52 residues long: Large ribosomal subunit protein bL33 (52 aa).

Belongs to the bacterial ribosomal protein bL33 family.

This chain is Large ribosomal subunit protein bL33, found in Chlamydia trachomatis serovar A (strain ATCC VR-571B / DSM 19440 / HAR-13).